Here is a 542-residue protein sequence, read N- to C-terminus: Carboxypeptidase Y (542 aa).

Positions Met-1–Ala-21 are cleaved as a signal peptide. Positions Leu-22 to Arg-127 are excised as a propeptide. 5 disulfides stabilise this stretch: Cys-182–Cys-421, Cys-316–Cys-330, Cys-340–Cys-363, Cys-347–Cys-356, and Cys-385–Cys-391. Residue Asn-213 is glycosylated (N-linked (GlcNAc...) asparagine). Ser-269 is an active-site residue. N-linked (GlcNAc...) asparagine glycosylation is present at Asn-291. Asp-461 is a catalytic residue. Cys-464 lines the substrate pocket. The active site involves His-518. A substrate-binding site is contributed by Met-519.

Belongs to the peptidase S10 family.

It localises to the vacuole. It carries out the reaction Release of a C-terminal amino acid with broad specificity.. Involved in degradation of small peptides. In Candida albicans (Yeast), this protein is Carboxypeptidase Y (CPY1).